A 289-amino-acid chain; its full sequence is Phosphatidylserine decarboxylase proenzyme (289 aa).

Catalysis depends on charge relay system; for autoendoproteolytic cleavage activity residues Asp89, His146, and Ser252. Ser252 functions as the Schiff-base intermediate with substrate; via pyruvic acid; for decarboxylase activity in the catalytic mechanism. Ser252 is subject to Pyruvic acid (Ser); by autocatalysis.

Belongs to the phosphatidylserine decarboxylase family. PSD-B subfamily. Prokaryotic type I sub-subfamily. Heterodimer of a large membrane-associated beta subunit and a small pyruvoyl-containing alpha subunit. It depends on pyruvate as a cofactor. In terms of processing, is synthesized initially as an inactive proenzyme. Formation of the active enzyme involves a self-maturation process in which the active site pyruvoyl group is generated from an internal serine residue via an autocatalytic post-translational modification. Two non-identical subunits are generated from the proenzyme in this reaction, and the pyruvate is formed at the N-terminus of the alpha chain, which is derived from the carboxyl end of the proenzyme. The autoendoproteolytic cleavage occurs by a canonical serine protease mechanism, in which the side chain hydroxyl group of the serine supplies its oxygen atom to form the C-terminus of the beta chain, while the remainder of the serine residue undergoes an oxidative deamination to produce ammonia and the pyruvoyl prosthetic group on the alpha chain. During this reaction, the Ser that is part of the protease active site of the proenzyme becomes the pyruvoyl prosthetic group, which constitutes an essential element of the active site of the mature decarboxylase.

It is found in the cell membrane. It catalyses the reaction a 1,2-diacyl-sn-glycero-3-phospho-L-serine + H(+) = a 1,2-diacyl-sn-glycero-3-phosphoethanolamine + CO2. Its pathway is phospholipid metabolism; phosphatidylethanolamine biosynthesis; phosphatidylethanolamine from CDP-diacylglycerol: step 2/2. In terms of biological role, catalyzes the formation of phosphatidylethanolamine (PtdEtn) from phosphatidylserine (PtdSer). In Shewanella putrefaciens (strain CN-32 / ATCC BAA-453), this protein is Phosphatidylserine decarboxylase proenzyme.